The following is a 342-amino-acid chain: uncharacterized protein (342 aa).

It belongs to the proline racemase family.

This is an uncharacterized protein from Brucella canis (strain ATCC 23365 / NCTC 10854 / RM-666).